Consider the following 150-residue polypeptide: Large ribosomal subunit protein uL16 (150 aa).

Belongs to the universal ribosomal protein uL16 family. Component of the small ribosomal subunit. Mature ribosomes consist of a small (40S) and a large (60S) subunit. The 40S subunit contains about 33 different proteins and 1 molecule of RNA (18S). The 60S subunit contains about 49 different proteins and 3 molecules of RNA (25S, 5.8S and 5S).

This is Large ribosomal subunit protein uL16 (RPL10) from Nicotiana tabacum (Common tobacco).